The primary structure comprises 432 residues: Gamma-glutamyl phosphate reductase (432 aa).

This sequence belongs to the gamma-glutamyl phosphate reductase family.

The protein resides in the cytoplasm. It catalyses the reaction L-glutamate 5-semialdehyde + phosphate + NADP(+) = L-glutamyl 5-phosphate + NADPH + H(+). It functions in the pathway amino-acid biosynthesis; L-proline biosynthesis; L-glutamate 5-semialdehyde from L-glutamate: step 2/2. Functionally, catalyzes the NADPH-dependent reduction of L-glutamate 5-phosphate into L-glutamate 5-semialdehyde and phosphate. The product spontaneously undergoes cyclization to form 1-pyrroline-5-carboxylate. The chain is Gamma-glutamyl phosphate reductase from Methylorubrum populi (strain ATCC BAA-705 / NCIMB 13946 / BJ001) (Methylobacterium populi).